The chain runs to 358 residues: Uptake hydrogenase small subunit (358 aa).

Residues 1–45 (MSDIETFYDVMRRQGITRRSFMKSVRSPQHVLGLGPSFVPKIGEA) form the signal peptide. [4Fe-4S] cluster contacts are provided by Cys62, Cys65, Cys160, Cys194, His232, Cys235, Cys260, and Cys266. Residues Cys275, Cys294, and Cys297 each coordinate [3Fe-4S] cluster.

The protein belongs to the [NiFe]/[NiFeSe] hydrogenase small subunit family. In terms of assembly, heterodimer of a large and a small subunit. The cofactor is [4Fe-4S] cluster. Requires [3Fe-4S] cluster as cofactor.

The protein resides in the cell membrane. It carries out the reaction H2 + A = AH2. In terms of biological role, this enzyme recycles the H(2) produced by nitrogenase to increase the production of ATP and to protect nitrogenase against inhibition or damage by O(2) under carbon- or phosphate-limited conditions. The chain is Uptake hydrogenase small subunit (hupA) from Rhodobacter capsulatus (Rhodopseudomonas capsulata).